Here is a 948-residue protein sequence, read N- to C-terminus: Bifunctional glutamine synthetase adenylyltransferase/adenylyl-removing enzyme (948 aa).

An adenylyl removase region spans residues 1-444 (MSLPSALLPT…VFATLIGEED (444 aa)). An adenylyl transferase region spans residues 452–948 (ARHFHELWDM…VIQAWQQWLG (497 aa)).

It belongs to the GlnE family. The cofactor is Mg(2+).

It catalyses the reaction [glutamine synthetase]-O(4)-(5'-adenylyl)-L-tyrosine + phosphate = [glutamine synthetase]-L-tyrosine + ADP. The enzyme catalyses [glutamine synthetase]-L-tyrosine + ATP = [glutamine synthetase]-O(4)-(5'-adenylyl)-L-tyrosine + diphosphate. Involved in the regulation of glutamine synthetase GlnA, a key enzyme in the process to assimilate ammonia. When cellular nitrogen levels are high, the C-terminal adenylyl transferase (AT) inactivates GlnA by covalent transfer of an adenylyl group from ATP to specific tyrosine residue of GlnA, thus reducing its activity. Conversely, when nitrogen levels are low, the N-terminal adenylyl removase (AR) activates GlnA by removing the adenylyl group by phosphorolysis, increasing its activity. The regulatory region of GlnE binds the signal transduction protein PII (GlnB) which indicates the nitrogen status of the cell. In Vibrio cholerae serotype O1 (strain ATCC 39315 / El Tor Inaba N16961), this protein is Bifunctional glutamine synthetase adenylyltransferase/adenylyl-removing enzyme.